Here is a 304-residue protein sequence, read N- to C-terminus: Acetyl-coenzyme A carboxylase carboxyl transferase subunit beta (304 aa).

One can recognise a CoA carboxyltransferase N-terminal domain in the interval 29 to 298; it reads LWTKCVSCAA…QAYRPSPQAS (270 aa). Zn(2+) is bound by residues Cys33, Cys36, Cys52, and Cys55. The segment at 33–55 adopts a C4-type zinc-finger fold; it reads CVSCAALHYTKDFQLNLCVCPAC.

The protein belongs to the AccD/PCCB family. In terms of assembly, acetyl-CoA carboxylase is a heterohexamer composed of biotin carboxyl carrier protein (AccB), biotin carboxylase (AccC) and two subunits each of ACCase subunit alpha (AccA) and ACCase subunit beta (AccD). Requires Zn(2+) as cofactor.

Its subcellular location is the cytoplasm. The catalysed reaction is N(6)-carboxybiotinyl-L-lysyl-[protein] + acetyl-CoA = N(6)-biotinyl-L-lysyl-[protein] + malonyl-CoA. It functions in the pathway lipid metabolism; malonyl-CoA biosynthesis; malonyl-CoA from acetyl-CoA: step 1/1. Its function is as follows. Component of the acetyl coenzyme A carboxylase (ACC) complex. Biotin carboxylase (BC) catalyzes the carboxylation of biotin on its carrier protein (BCCP) and then the CO(2) group is transferred by the transcarboxylase to acetyl-CoA to form malonyl-CoA. In Gloeobacter violaceus (strain ATCC 29082 / PCC 7421), this protein is Acetyl-coenzyme A carboxylase carboxyl transferase subunit beta.